The sequence spans 500 residues: Lysine--tRNA ligase (500 aa).

The Mg(2+) site is built by Glu-411 and Glu-418.

It belongs to the class-II aminoacyl-tRNA synthetase family. In terms of assembly, homodimer. The cofactor is Mg(2+).

It localises to the cytoplasm. It carries out the reaction tRNA(Lys) + L-lysine + ATP = L-lysyl-tRNA(Lys) + AMP + diphosphate. In Actinobacillus pleuropneumoniae serotype 5b (strain L20), this protein is Lysine--tRNA ligase.